Reading from the N-terminus, the 266-residue chain is Ribonuclease HII (266 aa).

The tract at residues 19–38 (HPGMIRDKEKPAPTKPGKGV) is disordered. An RNase H type-2 domain is found at 58–246 (WPVAGCDEAG…VVAARQKHQP (189 aa)). Residues Asp-64, Glu-65, and Asp-155 each contribute to the a divalent metal cation site.

The protein belongs to the RNase HII family. Requires Mn(2+) as cofactor. Mg(2+) serves as cofactor.

It localises to the cytoplasm. It catalyses the reaction Endonucleolytic cleavage to 5'-phosphomonoester.. In terms of biological role, endonuclease that specifically degrades the RNA of RNA-DNA hybrids. This Rhodopseudomonas palustris (strain BisB18) protein is Ribonuclease HII.